The sequence spans 387 residues: 26S proteasome regulatory subunit 6B homolog (387 aa).

An ATP-binding site is contributed by 175–182 (GPPGTGKT).

It belongs to the AAA ATPase family. As to quaternary structure, the 26S proteasome consists of a 20S proteasome core and two 19S regulatory subunits. The 20S proteasome core is composed of 28 subunits that are arranged in four stacked rings, resulting in a barrel-shaped structure. The two end rings are each formed by seven alpha subunits, and the two central rings are each formed by seven beta subunits. The catalytic chamber with the active sites is on the inside of the barrel.

It localises to the cytoplasm. It is found in the nucleus. Functionally, acts as a regulatory subunit of the 26S proteasome which degrades poly-ubiquitinated proteins in the cytoplasm and in the nucleus. It is essential for the regulated turnover of proteins and for the removal of misfolded proteins. The proteasome is a multicatalytic proteinase complex that is characterized by its ability to cleave peptides with Arg, Phe, Tyr, Leu, and Glu adjacent to the leaving group at neutral or slightly basic pH. This chain is 26S proteasome regulatory subunit 6B homolog, found in Encephalitozoon cuniculi (strain GB-M1) (Microsporidian parasite).